Reading from the N-terminus, the 260-residue chain is Hydroxyacylglutathione hydrolase (260 aa).

The Zn(2+) site is built by histidine 66, histidine 68, aspartate 70, histidine 71, histidine 125, aspartate 150, and histidine 188.

The protein belongs to the metallo-beta-lactamase superfamily. Glyoxalase II family. Monomer. Zn(2+) is required as a cofactor.

It catalyses the reaction an S-(2-hydroxyacyl)glutathione + H2O = a 2-hydroxy carboxylate + glutathione + H(+). It participates in secondary metabolite metabolism; methylglyoxal degradation; (R)-lactate from methylglyoxal: step 2/2. Thiolesterase that catalyzes the hydrolysis of S-D-lactoyl-glutathione to form glutathione and D-lactic acid. This is Hydroxyacylglutathione hydrolase from Prochlorococcus marinus (strain MIT 9303).